The following is a 254-amino-acid chain: uncharacterized protein (254 aa).

The protein belongs to the MtxX family.

This is an uncharacterized protein from Methanopyrus kandleri (strain AV19 / DSM 6324 / JCM 9639 / NBRC 100938).